The sequence spans 59 residues: UPF0291 protein CPR_1073 (59 aa).

The interval 1–30 is disordered; it reads MNIDELTKRINELHKKHKEEGLSEDEHKER.

This sequence belongs to the UPF0291 family.

Its subcellular location is the cytoplasm. In Clostridium perfringens (strain SM101 / Type A), this protein is UPF0291 protein CPR_1073.